A 114-amino-acid polypeptide reads, in one-letter code: Large ribosomal subunit protein uL22 (114 aa).

It belongs to the universal ribosomal protein uL22 family. Part of the 50S ribosomal subunit.

In terms of biological role, this protein binds specifically to 23S rRNA; its binding is stimulated by other ribosomal proteins, e.g. L4, L17, and L20. It is important during the early stages of 50S assembly. It makes multiple contacts with different domains of the 23S rRNA in the assembled 50S subunit and ribosome. Functionally, the globular domain of the protein is located near the polypeptide exit tunnel on the outside of the subunit, while an extended beta-hairpin is found that lines the wall of the exit tunnel in the center of the 70S ribosome. The polypeptide is Large ribosomal subunit protein uL22 (Alcanivorax borkumensis (strain ATCC 700651 / DSM 11573 / NCIMB 13689 / SK2)).